The primary structure comprises 388 residues: MSDEASATTSYEKFLTPEEPFPFLGAPRGVGTCPSEEPGCLDISDFGCQLSSCHRTDPLHRFHTNRWNLTSCGTSVASSECSEELFSSVSVGDQDDCYSLLDDQDFTSFDLFPEGSVCSDVSSSISTYWDWSDSEFEWQLPGSDIASGSDVLSDVIPSIPSSPCLVSKKKNKHRNLDELAWSAMTNDEQVEYIEYLSRKVSTEMGLREQLDIIKIIDPSAQISPTDSEFIIELNCLTDEKLKQVRNYIKEHSLRQRPTREAWKRSNFSCASTSGVSGASASASSSSASMVSSASSSGSSVGNSASNSSANMSRAHSDSNLSASAAERIRDSKKRSKQRKLQQKAFRKRQLKEQRQARKERLSGLFLNEEVLSLKVTEEDHEADVDVLM.

Positions 288-312 (SMVSSASSSGSSVGNSASNSSANMS) are enriched in low complexity. Residues 288-358 (SMVSSASSSG…QLKEQRQARK (71 aa)) are disordered. Phosphoserine is present on residues S316 and S321. A compositionally biased stretch (basic residues) spans 330-349 (DSKKRSKQRKLQQKAFRKRQ).

This sequence belongs to the FAM199 family.

The protein is Protein FAM199X (Fam199x) of Mus musculus (Mouse).